Reading from the N-terminus, the 298-residue chain is Tyrosine recombinase XerC (298 aa).

A Core-binding (CB) domain is found at Met-1–Met-84. One can recognise a Tyr recombinase domain in the interval Tyr-105–Leu-286. Catalysis depends on residues Arg-145, Lys-169, His-238, Arg-241, and His-264. The O-(3'-phospho-DNA)-tyrosine intermediate role is filled by Tyr-273.

It belongs to the 'phage' integrase family. XerC subfamily. Forms a cyclic heterotetrameric complex composed of two molecules of XerC and two molecules of XerD.

It localises to the cytoplasm. In terms of biological role, site-specific tyrosine recombinase, which acts by catalyzing the cutting and rejoining of the recombining DNA molecules. The XerC-XerD complex is essential to convert dimers of the bacterial chromosome into monomers to permit their segregation at cell division. It also contributes to the segregational stability of plasmids. In Staphylococcus aureus (strain bovine RF122 / ET3-1), this protein is Tyrosine recombinase XerC.